Here is a 146-residue protein sequence, read N- to C-terminus: Snaclec stejaggregin-B subunit beta-2 (146 aa).

A signal peptide spans 1–23 (MGRFIFVSFGLLVVFLSLSGSGA). Residues 32-143 (YDLYCYRVFQ…CSQTYPFVCK (112 aa)) enclose the C-type lectin domain. Intrachain disulfides connect Cys53–Cys142 and Cys119–Cys134.

The protein belongs to the snaclec family. Heteromultimer; disulfide-linked. Expressed by the venom gland.

It is found in the secreted. Functionally, interferes with one step of hemostasis (modulation of platelet aggregation, or coagulation cascade, for example). The polypeptide is Snaclec stejaggregin-B subunit beta-2 (Trimeresurus stejnegeri (Chinese green tree viper)).